A 397-amino-acid chain; its full sequence is Elongation factor Tu (397 aa).

The tr-type G domain occupies 10-206 (KPHVNIGTIG…AVDEYIPTPE (197 aa)). The interval 19 to 26 (GHIDHGKT) is G1. 19–26 (GHIDHGKT) lines the GTP pocket. Threonine 26 contacts Mg(2+). Residues 62 to 66 (GITIS) form a G2 region. The segment at 83-86 (DCPG) is G3. Residues 83 to 87 (DCPGH) and 138 to 141 (NKCD) contribute to the GTP site. Residues 138 to 141 (NKCD) are G4. The segment at 176–178 (AAF) is G5.

It belongs to the TRAFAC class translation factor GTPase superfamily. Classic translation factor GTPase family. EF-Tu/EF-1A subfamily. As to quaternary structure, monomer.

It is found in the cytoplasm. The enzyme catalyses GTP + H2O = GDP + phosphate + H(+). Its function is as follows. GTP hydrolase that promotes the GTP-dependent binding of aminoacyl-tRNA to the A-site of ribosomes during protein biosynthesis. This chain is Elongation factor Tu, found in Nocardioides sp. (strain ATCC BAA-499 / JS614).